Reading from the N-terminus, the 179-residue chain is ATP synthase subunit b, chloroplastic (179 aa).

The helical transmembrane segment at 28-46 threads the bilayer; the sequence is IINIAALVGILIYAGRDFL.

Belongs to the ATPase B chain family. F-type ATPases have 2 components, F(1) - the catalytic core - and F(0) - the membrane proton channel. F(1) has five subunits: alpha(3), beta(3), gamma(1), delta(1), epsilon(1). F(0) has four main subunits: a(1), b(1), b'(1) and c(10-14). The alpha and beta chains form an alternating ring which encloses part of the gamma chain. F(1) is attached to F(0) by a central stalk formed by the gamma and epsilon chains, while a peripheral stalk is formed by the delta, b and b' chains.

It is found in the plastid. It localises to the chloroplast thylakoid membrane. F(1)F(0) ATP synthase produces ATP from ADP in the presence of a proton or sodium gradient. F-type ATPases consist of two structural domains, F(1) containing the extramembraneous catalytic core and F(0) containing the membrane proton channel, linked together by a central stalk and a peripheral stalk. During catalysis, ATP synthesis in the catalytic domain of F(1) is coupled via a rotary mechanism of the central stalk subunits to proton translocation. In terms of biological role, component of the F(0) channel, it forms part of the peripheral stalk, linking F(1) to F(0). The sequence is that of ATP synthase subunit b, chloroplastic from Trieres chinensis (Marine centric diatom).